The primary structure comprises 271 residues: D-methionine-binding lipoprotein MetQ (271 aa).

A signal peptide spans 1–22 (MAFKFKTFAAVGALIGSLALAG). Residue Cys23 is the site of N-palmitoyl cysteine attachment. Cys23 carries S-diacylglycerol cysteine lipidation.

The protein belongs to the NlpA lipoprotein family.

The protein localises to the cell membrane. Functionally, this protein is a component of a D-methionine permease, a binding protein-dependent, ATP-driven transport system. The chain is D-methionine-binding lipoprotein MetQ (metQ) from Salmonella typhi.